Here is a 257-residue protein sequence, read N- to C-terminus: Putative hydro-lyase Bamb_5282 (257 aa).

The protein belongs to the D-glutamate cyclase family.

This is Putative hydro-lyase Bamb_5282 from Burkholderia ambifaria (strain ATCC BAA-244 / DSM 16087 / CCUG 44356 / LMG 19182 / AMMD) (Burkholderia cepacia (strain AMMD)).